The primary structure comprises 326 residues: 4-hydroxy-3-methylbut-2-enyl diphosphate reductase (326 aa).

Position 22 (cysteine 22) interacts with [4Fe-4S] cluster. Histidine 51 and histidine 84 together coordinate (2E)-4-hydroxy-3-methylbut-2-enyl diphosphate. Residues histidine 51 and histidine 84 each contribute to the dimethylallyl diphosphate site. Histidine 51 and histidine 84 together coordinate isopentenyl diphosphate. Cysteine 106 provides a ligand contact to [4Fe-4S] cluster. (2E)-4-hydroxy-3-methylbut-2-enyl diphosphate is bound at residue histidine 134. Residue histidine 134 participates in dimethylallyl diphosphate binding. Histidine 134 contributes to the isopentenyl diphosphate binding site. Glutamate 136 serves as the catalytic Proton donor. Threonine 174 serves as a coordination point for (2E)-4-hydroxy-3-methylbut-2-enyl diphosphate. Cysteine 204 contributes to the [4Fe-4S] cluster binding site. (2E)-4-hydroxy-3-methylbut-2-enyl diphosphate-binding residues include serine 232, serine 233, asparagine 234, and serine 276. The dimethylallyl diphosphate site is built by serine 232, serine 233, asparagine 234, and serine 276. 4 residues coordinate isopentenyl diphosphate: serine 232, serine 233, asparagine 234, and serine 276.

It belongs to the IspH family. Requires [4Fe-4S] cluster as cofactor.

The catalysed reaction is isopentenyl diphosphate + 2 oxidized [2Fe-2S]-[ferredoxin] + H2O = (2E)-4-hydroxy-3-methylbut-2-enyl diphosphate + 2 reduced [2Fe-2S]-[ferredoxin] + 2 H(+). The enzyme catalyses dimethylallyl diphosphate + 2 oxidized [2Fe-2S]-[ferredoxin] + H2O = (2E)-4-hydroxy-3-methylbut-2-enyl diphosphate + 2 reduced [2Fe-2S]-[ferredoxin] + 2 H(+). It functions in the pathway isoprenoid biosynthesis; dimethylallyl diphosphate biosynthesis; dimethylallyl diphosphate from (2E)-4-hydroxy-3-methylbutenyl diphosphate: step 1/1. It participates in isoprenoid biosynthesis; isopentenyl diphosphate biosynthesis via DXP pathway; isopentenyl diphosphate from 1-deoxy-D-xylulose 5-phosphate: step 6/6. Catalyzes the conversion of 1-hydroxy-2-methyl-2-(E)-butenyl 4-diphosphate (HMBPP) into a mixture of isopentenyl diphosphate (IPP) and dimethylallyl diphosphate (DMAPP). Acts in the terminal step of the DOXP/MEP pathway for isoprenoid precursor biosynthesis. In Bordetella bronchiseptica (strain ATCC BAA-588 / NCTC 13252 / RB50) (Alcaligenes bronchisepticus), this protein is 4-hydroxy-3-methylbut-2-enyl diphosphate reductase.